The chain runs to 1342 residues: DNA-directed RNA polymerase subunit beta (1342 aa).

It belongs to the RNA polymerase beta chain family. The RNAP catalytic core consists of 2 alpha, 1 beta, 1 beta' and 1 omega subunit. When a sigma factor is associated with the core the holoenzyme is formed, which can initiate transcription.

The catalysed reaction is RNA(n) + a ribonucleoside 5'-triphosphate = RNA(n+1) + diphosphate. Functionally, DNA-dependent RNA polymerase catalyzes the transcription of DNA into RNA using the four ribonucleoside triphosphates as substrates. The protein is DNA-directed RNA polymerase subunit beta of Yersinia pestis bv. Antiqua (strain Angola).